The sequence spans 334 residues: Tyrosine-protein kinase SRK3 (334 aa).

An SH2 domain is found at 1-42 (IRTLDDGGFYMANRISFPTLQNLVSHYMMDADGLAQRLSRPC). A Protein kinase domain is found at 66 to 321 (IQLQRKLGQG…LKNLLEDYYV (256 aa)). ATP-binding positions include 72–80 (LGQGNFGEV) and K94. D186 functions as the Proton acceptor in the catalytic mechanism.

Belongs to the protein kinase superfamily. Tyr protein kinase family.

The protein resides in the cytoplasm. The enzyme catalyses L-tyrosyl-[protein] + ATP = O-phospho-L-tyrosyl-[protein] + ADP + H(+). The sequence is that of Tyrosine-protein kinase SRK3 (SRK3) from Spongilla lacustris (Freshwater sponge).